A 395-amino-acid chain; its full sequence is Biotin biosynthesis cytochrome P450 (395 aa).

Residue Arg-60 participates in substrate binding. 89-93 (HRRLR) is a binding site for heme. 169–173 (IDFTR) contacts substrate. Cys-250 and Cys-275 are oxidised to a cystine. Residue 285 to 287 (TAR) coordinates heme. Tyr-307 contributes to the substrate binding site. Heme contacts are provided by residues 343–345 (HVC) and Cys-345.

Heme serves as cofactor.

The catalysed reaction is a C2-C8-saturated long-chain fatty acyl-[ACP] + 2 reduced [flavodoxin] + 3 O2 = 6-carboxyhexanoyl-[ACP] + a fatty aldehyde + 2 oxidized [flavodoxin] + 3 H2O + 3 H(+). Its pathway is cofactor biosynthesis; biotin biosynthesis. Functionally, catalyzes the C-C bond cleavage of fatty acid linked to acyl carrier protein (ACP) to generate pimelic acid for biotin biosynthesis. It has high affinity for long-chain fatty acids with the greatest affinity for myristic acid. The protein is Biotin biosynthesis cytochrome P450 (bioI) of Bacillus subtilis (strain 168).